The primary structure comprises 150 residues: Sulfur-rich protein, serovar D (150 aa).

2 helical membrane-spanning segments follow: residues 41 to 61 (VGLV…LVSA) and 67 to 87 (AIYL…VGIL).

The protein localises to the membrane. This Chlamydia trachomatis serovar D (strain ATCC VR-885 / DSM 19411 / UW-3/Cx) protein is Sulfur-rich protein, serovar D (srp).